Here is a 259-residue protein sequence, read N- to C-terminus: Small ribosomal subunit protein eS4 (259 aa).

The region spanning 41-105 (LPLSVLLKER…TDQSFRILYD (65 aa)) is the S4 RNA-binding domain. T248 carries the phosphothreonine modification. A Phosphoserine modification is found at S258.

This sequence belongs to the eukaryotic ribosomal protein eS4 family.

The chain is Small ribosomal subunit protein eS4 from Tetrahymena thermophila.